The sequence spans 263 residues: Metaxin-2 (263 aa).

At serine 2 the chain carries N-acetylserine.

It belongs to the metaxin family. Interacts with MTX1/metaxin-1. Associates with the mitochondrial contact site and cristae organizing system (MICOS) complex, composed of at least MICOS10/MIC10, CHCHD3/MIC19, CHCHD6/MIC25, APOOL/MIC27, IMMT/MIC60, APOO/MIC23/MIC26 and QIL1/MIC13. This complex was also known under the names MINOS or MitOS complex. The MICOS complex associates with mitochondrial outer membrane proteins SAMM50, MTX1 and MTX2 (together described as components of the mitochondrial outer membrane sorting assembly machinery (SAM) complex) and DNAJC11, mitochondrial inner membrane protein TMEM11 and with HSPA9. The MICOS and SAM complexes together with DNAJC11 are part of a large protein complex spanning both membranes termed the mitochondrial intermembrane space bridging (MIB) complex.

Its subcellular location is the mitochondrion outer membrane. The protein resides in the mitochondrion. Its function is as follows. Involved in transport of proteins into the mitochondrion. This is Metaxin-2 (MTX2) from Homo sapiens (Human).